Here is a 398-residue protein sequence, read N- to C-terminus: Beta-1,6-galactosyltransferase GALT29A (398 aa).

At 1–6 the chain is on the cytoplasmic side; that stretch reads MKRSVR. A helical; Signal-anchor for type II membrane protein transmembrane segment spans residues 7–27; sequence PLFSALLFAFFAATLICRVAI. Over 28–398 the chain is Lumenal; sequence RRSSFSFASA…FKIPLVQVYH (371 aa). Asn-221 and Asn-346 each carry an N-linked (GlcNAc...) asparagine glycan.

The protein belongs to the glycosyltransferase 29 family. As to quaternary structure, interacts with GALT31A.

The protein localises to the golgi apparatus membrane. In terms of biological role, galactosyltransferase involved in the biosynthesis of type II arabinogalactan. Possesses galactosyltransferase (GalT) activity in vitro, transferring galactose from UDP-galactose to a mixture of various oligosaccharides derived from arabinogalactan proteins. Forms a complex with GALT31A that can work cooperatively to enhance the activities of adding galactose residues at O6 positions to beta-1,6-galactan and beta-1,3-galactan. This chain is Beta-1,6-galactosyltransferase GALT29A, found in Arabidopsis thaliana (Mouse-ear cress).